The following is a 597-amino-acid chain: K(+) efflux antiporter 6 (597 aa).

Residues 1 to 35 (MVEGRRRRRFSLSSQQLALLLLLLSFFLCFSVASP) form the signal peptide. Helical transmembrane passes span 177 to 197 (LISD…AFAC), 201 to 221 (PVIT…LNFI), 224 to 244 (MVQV…ALGL), 257 to 277 (VAVL…GITV), 287 to 307 (GVFV…KFLM), 321 to 341 (IGIL…LPVL), 351 to 371 (MLSI…LSIL), 396 to 416 (LAAV…GLSL), 440 to 460 (IEPI…MLVN), 461 to 481 (VHFL…VIII), 499 to 519 (TALL…VLLS), and 543 to 563 (LVTT…GILL).

The protein belongs to the monovalent cation:proton antiporter 2 (CPA2) transporter (TC 2.A.37) family. KEA (TC 2.A.37.1) subfamily. In terms of tissue distribution, expressed in roots, stems, leaves, flowers and silique.

The protein localises to the golgi apparatus membrane. Its subcellular location is the golgi apparatus. The protein resides in the trans-Golgi network membrane. It localises to the prevacuolar compartment membrane. It is found in the endomembrane system. It carries out the reaction K(+)(in) + H(+)(out) = K(+)(out) + H(+)(in). Electroneutral K(+)/H(+) efflux antiporter involved in K(+) homeostasis and osmotic adjustment. Together with KEA4 and KEA5, promotes growth and development, and facilitates endosomal pH and ions homeostasis, as well as salt tolerance (e.g. K(+), NaCl and LiCl), probably by supporting cell wall biosynthesis during rapid etiolated seedling growth. The chain is K(+) efflux antiporter 6 from Arabidopsis thaliana (Mouse-ear cress).